Reading from the N-terminus, the 793-residue chain is Phenylalanine--tRNA ligase beta subunit (793 aa).

The 120-residue stretch at 40-159 (SKLNTKLVIG…MDEMVGREIS (120 aa)) folds into the tRNA-binding domain. The B5 domain maps to 401–476 (NYDNVYSITL…RLYGYDNIIE (76 aa)). Mg(2+)-binding residues include Asp454, Asp460, Glu463, and Glu464. Residues 701–793 (SKFQKSTRDI…NLKELKVKVR (93 aa)) form the FDX-ACB domain.

This sequence belongs to the phenylalanyl-tRNA synthetase beta subunit family. Type 1 subfamily. Tetramer of two alpha and two beta subunits. Requires Mg(2+) as cofactor.

The protein resides in the cytoplasm. The catalysed reaction is tRNA(Phe) + L-phenylalanine + ATP = L-phenylalanyl-tRNA(Phe) + AMP + diphosphate + H(+). This is Phenylalanine--tRNA ligase beta subunit from Mesoplasma florum (strain ATCC 33453 / NBRC 100688 / NCTC 11704 / L1) (Acholeplasma florum).